Reading from the N-terminus, the 213-residue chain is Thymidine kinase (213 aa).

ATP-binding positions include 22–29 (GSMFSGKT) and 94–97 (DEAQ). Residue E95 is the Proton acceptor of the active site. The Zn(2+) site is built by C151, C154, C183, and C186. The tract at residues 185-213 (RCFQPPRPTSTSSLKAPAPAATAPRPELP) is disordered. Positions 193-213 (TSTSSLKAPAPAATAPRPELP) are enriched in low complexity.

This sequence belongs to the thymidine kinase family. In terms of assembly, homotetramer.

The protein resides in the cytoplasm. The enzyme catalyses thymidine + ATP = dTMP + ADP + H(+). The polypeptide is Thymidine kinase (Rhodothermus sp. (strain ITI 518)).